Here is a 154-residue protein sequence, read N- to C-terminus: Catabolic 3-dehydroquinase (154 aa).

Y25 (proton acceptor) is an active-site residue. Substrate contacts are provided by N79, H85, and D92. The Proton donor role is filled by H105. Substrate contacts are provided by residues 106-107 (IS) and R116.

It belongs to the type-II 3-dehydroquinase family. As to quaternary structure, homododecamer. Adopts a ring-like structure, composed of an arrangement of two hexameric rings stacked on top of one another.

The catalysed reaction is 3-dehydroquinate = 3-dehydroshikimate + H2O. Its pathway is aromatic compound metabolism; 3,4-dihydroxybenzoate biosynthesis; 3,4-dihydroxybenzoate from 3-dehydroquinate: step 1/2. Functionally, is involved in the catabolism of quinate. Allows the utilization of quinate as carbon source via the beta-ketoadipate pathway. The polypeptide is Catabolic 3-dehydroquinase (Botryotinia fuckeliana (strain B05.10) (Noble rot fungus)).